The following is a 63-amino-acid chain: Iota-crystallin (63 aa).

Belongs to the calycin superfamily. Fatty-acid binding protein (FABP) family.

Binds vitamin A2 in the eye lens and thus functions as a UV filter. Intracellular transport of retinol. In Gonatodes vittatus (Wiegmann's striped gecko), this protein is Iota-crystallin (CRBPI).